Reading from the N-terminus, the 412-residue chain is 4-hydroxy-3-methylbut-2-en-1-yl diphosphate synthase (ferredoxin) (412 aa).

Over residues 1–12 (MQTLDRPNAPSQ) the composition is skewed to polar residues. A disordered region spans residues 1 to 22 (MQTLDRPNAPSQQPYPEPVYPR). The [4Fe-4S] cluster site is built by Cys-314, Cys-317, Cys-348, and Glu-355.

Belongs to the IspG family. It depends on [4Fe-4S] cluster as a cofactor.

The enzyme catalyses (2E)-4-hydroxy-3-methylbut-2-enyl diphosphate + 2 oxidized [2Fe-2S]-[ferredoxin] + H2O = 2-C-methyl-D-erythritol 2,4-cyclic diphosphate + 2 reduced [2Fe-2S]-[ferredoxin] + H(+). It functions in the pathway isoprenoid biosynthesis; isopentenyl diphosphate biosynthesis via DXP pathway; isopentenyl diphosphate from 1-deoxy-D-xylulose 5-phosphate: step 5/6. Functionally, converts 2C-methyl-D-erythritol 2,4-cyclodiphosphate (ME-2,4cPP) into 1-hydroxy-2-methyl-2-(E)-butenyl 4-diphosphate. The sequence is that of 4-hydroxy-3-methylbut-2-en-1-yl diphosphate synthase (ferredoxin) from Synechococcus sp. (strain JA-3-3Ab) (Cyanobacteria bacterium Yellowstone A-Prime).